Consider the following 190-residue polypeptide: Putative transcription factor ovo-like protein 3 (190 aa).

Disordered regions lie at residues 1–21 and 35–65; these read MPRAFLVRSRRPQPPNWGHLP and SLGGPPAQQSSSVRDPWTAQPTQGNLTSAPR. Positions 41–62 are enriched in polar residues; that stretch reads AQQSSSVRDPWTAQPTQGNLTS. 4 consecutive C2H2-type zinc fingers follow at residues 70 to 92, 98 to 120, 126 to 149, and 165 to 187; these read LGCPLCPKAFPLQRMLTRHLKCH, HLCRCCGKGFHDAFDLKRHMRTH, FRCSACGKAFTQRCSLEAHLAKVH, and HVCEDCGFTSSRPDTYAQHRALH.

Belongs to the krueppel C2H2-type zinc-finger protein family.

The protein resides in the nucleus. Its function is as follows. May act as a transcription regulator. The sequence is that of Putative transcription factor ovo-like protein 3 (OVOL3) from Homo sapiens (Human).